The primary structure comprises 266 residues: Luciferase (266 aa).

The chain crosses the membrane as a helical span at residues 22 to 41 (GLAVTCCAVAVASIIAFPYI).

This sequence belongs to the fungal luciferase family.

The protein resides in the membrane. The enzyme catalyses 3-hydroxyhispidin + O2 = (E)-caffeoylpyruvate + hnu + CO2. It catalyses the reaction 3-hydroxyhispidin + O2 = 4-[(E)-2-(3,4-dihydroxyphenyl)ethenyl]-1,7-dihydroxy-2,3,5-trioxabicyclo[2.2.2]oct-7-en-6-one. Its function is as follows. Luciferase; part of the gene cluster that mediates the fungal bioluminescence cycle. Uses the fungal luciferin 3-hydroxyhispidin as a substrate to produce an endoperoxide as a high-energy intermediate with decomposition that yields oxyluciferin (also known as caffeoylpyruvate) and light emission. The fungal bioluminescence cycle begins with the hispidin synthetase that catalyzes the formation of hispidin which is further hydroxylated by the hispidin-3-hydroxylase, yielding the fungal luciferin 3-hydroxyhispidin. The luciferase then produces an endoperoxide as a high-energy intermediate with decomposition that yields oxyluciferin and light emission. Oxyluciferin can be recycled to caffeic acid by caffeoylpyruvate hydrolase. This Armillaria mellea (Honey mushroom) protein is Luciferase.